Here is a 1553-residue protein sequence, read N- to C-terminus: Sterol 3-beta-glucosyltransferase (1553 aa).

Polar residues-rich tracts occupy residues 1–10 (MASSQPTSSG) and 25–36 (LNTETSSSQHRA). Disordered stretches follow at residues 1–106 (MASS…NEED) and 189–270 (PASA…GLAP). Residues 90–100 (LPDRLKDNGKE) show a composition bias toward basic and acidic residues. Residues 211-222 (LLQSVPSLSRLS) are compositionally biased toward low complexity. Residues 223–232 (SSHKSKKTKQ) show a composition bias toward basic residues. GRAM domains follow at residues 323 to 370 (KKLK…HLPK) and 464 to 495 (SLQRVIFRSHNDGDSVKISIPIRNILDIEEAQ). The 97-residue stretch at 374–470 (EIAKSGYLSK…WVKSLQRVIF (97 aa)) folds into the PH domain. Disordered stretches follow at residues 542-569 (SPEDSGANDAPKGTGGDRAIGDNLGSPR), 611-662 (FSRR…FDDP), and 805-825 (GKKHYDHPAGRRTEREDVEDD). The segment covering 633–650 (LHGDGRRSFSKPRHEPHA) has biased composition (basic and acidic residues). Residues 651 to 662 (STDSYAQSFDDP) are compositionally biased toward polar residues. Over residues 810 to 819 (DHPAGRRTER) the composition is skewed to basic and acidic residues. The GRAM 3 domain maps to 834–900 (ARFQAHFALP…KDIETVDKEK (67 aa)). The UDP-alpha-D-glucose site is built by Ser-1020, Arg-1021, Asp-1023, Ala-1328, His-1330, His-1343, Ser-1346, Gly-1347, Thr-1348, Asp-1367, and Gln-1368. 2 disordered regions span residues 1446–1504 (KHQS…GSMS) and 1527–1553 (PALGSRVLSSPPTSPGAMRGAGGVKYV). Acidic residues predominate over residues 1466 to 1488 (PEDDQGQAAEEDDIDADDEEEES).

It belongs to the glycosyltransferase 28 family.

The protein resides in the cytoplasm. The protein localises to the preautophagosomal structure membrane. The enzyme catalyses a sterol + UDP-alpha-D-glucose = a sterol 3-beta-D-glucoside + UDP + H(+). The catalysed reaction is ergosterol + UDP-alpha-D-glucose = ergosteryl 3-beta-D-glucoside + UDP + H(+). Its function is as follows. Sterol glycosyltransferase responsible for the glycosylation of ergosterol to form ergosterol-glucoside. The chain is Sterol 3-beta-glucosyltransferase (apg-12) from Neurospora crassa (strain ATCC 24698 / 74-OR23-1A / CBS 708.71 / DSM 1257 / FGSC 987).